A 189-amino-acid polypeptide reads, in one-letter code: HTH-type transcriptional repressor LfrR (189 aa).

Positions 12–70 constitute an HTH tetR-type domain; the sequence is ERTRRAILDAAMLVLADHPTAALGDIAAAAGVGRSTVHRYYPERTDLLRALARHVHDLS. A DNA-binding region (H-T-H motif) is located at residues 33-52; sequence ALGDIAAAAGVGRSTVHRYY. Residues 70-71 are proflavine binding; the sequence is SN.

In terms of assembly, homodimer. Forms a structurally asymmetric homodimer exhibiting local unfolding and a blocked drug-binding site.

Its activity is regulated as follows. Repressor activity is regulated by binding of different substrates of the LfrA multidrug efflux pump, such as acriflavine, proflavine, ethidium bromide and rhodamine 123. Binding of these ligands causes the dissociation of LfrR from the promoter, inducing lfrA expression. In terms of biological role, represses the transcription of the lfrRA operon by binding directly to the promoter region of lfrR-lfrA. Binds specifically to a 143-bp region upstream of the lfrR gene. The polypeptide is HTH-type transcriptional repressor LfrR (Mycolicibacterium smegmatis (strain ATCC 700084 / mc(2)155) (Mycobacterium smegmatis)).